A 601-amino-acid polypeptide reads, in one-letter code: Beta-phellandrene synthase (601 aa).

Residues 1-35 (MSTISIHHVGILRNPLPSKNKRALINNPWSLSLPR) constitute a chloroplast transit peptide. Mn(2+)-binding residues include aspartate 356 and aspartate 360. A DDXXD motif motif is present at residues 356–360 (DDVYD). Homodimerization stretches follow at residues 362-368 (YGTLDEL) and 434-471 (EAEWYESGYAPSLEEYLSIATISIGLIPIVIPLDLSIP). The Mn(2+) site is built by aspartate 499 and glutamate 507.

The protein belongs to the terpene synthase family. As to quaternary structure, homodimer. It depends on Mn(2+) as a cofactor. The cofactor is Mg(2+). In terms of tissue distribution, expressed in peltate glandular trichomes. Present at low levels in flowers and stems.

It localises to the plastid. The protein localises to the chloroplast. It catalyses the reaction (2E)-geranyl diphosphate = beta-phellandrene + diphosphate. It carries out the reaction (2E)-geranyl diphosphate = (1R,5R)-sabinene + diphosphate. Its pathway is secondary metabolite biosynthesis; terpenoid biosynthesis. Involved in the biosynthesis of phenolic monoterpenes natural products. Monoterpene synthase that catalyzes mainly the formation of olefins such as sabinene and beta-phellandrene, and minor amounts of other monoterpenes (e.g. myrcene, gamma-terpinene, alpha-thujene and alpha-pinene) from geranyl diphosphate (GPP). The chain is Beta-phellandrene synthase from Origanum vulgare (Wild marjoram).